Here is a 304-residue protein sequence, read N- to C-terminus: Protoheme IX farnesyltransferase 1 (304 aa).

8 helical membrane passes run 24–44, 47–67, 99–119, 122–142, 150–170, 176–196, 228–248, and 280–300; these read VVVL…KAPL, FVPW…AGAA, MALG…LAFT, LTAW…TGFL, IVIG…AITG, PLLL…ALCI, LVLF…LVYL, and YSIV…YLPL.

The protein belongs to the UbiA prenyltransferase family. Protoheme IX farnesyltransferase subfamily.

It is found in the cell inner membrane. The catalysed reaction is heme b + (2E,6E)-farnesyl diphosphate + H2O = Fe(II)-heme o + diphosphate. It functions in the pathway porphyrin-containing compound metabolism; heme O biosynthesis; heme O from protoheme: step 1/1. Converts heme B (protoheme IX) to heme O by substitution of the vinyl group on carbon 2 of heme B porphyrin ring with a hydroxyethyl farnesyl side group. The polypeptide is Protoheme IX farnesyltransferase 1 (Pseudomonas paraeruginosa (strain DSM 24068 / PA7) (Pseudomonas aeruginosa (strain PA7))).